A 28-amino-acid chain; its full sequence is Cliotide T21 (28 aa).

Residues 1–28 (DLQCAETCVHSPCIGPCYCKHGLICYRN) constitute a cross-link (cyclopeptide (Asp-Asn)). 3 disulfides stabilise this stretch: Cys-4/Cys-17, Cys-8/Cys-19, and Cys-13/Cys-25.

Contains 3 disulfide bonds. Post-translationally, this is a cyclic peptide. Expressed in root nodules but not in seed.

Probably participates in a plant defense mechanism. Not active against Gram-negative bacterium E.coli ATCC 700926 or Gram-positive bacterium S.aureus ATCC 12600 up to a concentration of 100 uM under low-salt conditions. The protein is Cliotide T21 of Clitoria ternatea (Butterfly pea).